The sequence spans 396 residues: Acetate kinase (396 aa).

Mg(2+) is bound at residue N7. K14 is an ATP binding site. R88 lines the substrate pocket. D145 (proton donor/acceptor) is an active-site residue. ATP is bound by residues H203–G207, D278–R280, and G326–N330. Mg(2+) is bound at residue E379.

It belongs to the acetokinase family. As to quaternary structure, homodimer. It depends on Mg(2+) as a cofactor. Requires Mn(2+) as cofactor.

The protein localises to the cytoplasm. It carries out the reaction acetate + ATP = acetyl phosphate + ADP. Its pathway is metabolic intermediate biosynthesis; acetyl-CoA biosynthesis; acetyl-CoA from acetate: step 1/2. Its function is as follows. Catalyzes the formation of acetyl phosphate from acetate and ATP. Can also catalyze the reverse reaction. The protein is Acetate kinase of Phytoplasma australiense.